The following is a 370-amino-acid chain: Histidinol-phosphate aminotransferase (370 aa).

The residue at position 230 (lysine 230) is an N6-(pyridoxal phosphate)lysine.

Belongs to the class-II pyridoxal-phosphate-dependent aminotransferase family. Histidinol-phosphate aminotransferase subfamily. In terms of assembly, homodimer. Pyridoxal 5'-phosphate is required as a cofactor.

The catalysed reaction is L-histidinol phosphate + 2-oxoglutarate = 3-(imidazol-4-yl)-2-oxopropyl phosphate + L-glutamate. The protein operates within amino-acid biosynthesis; L-histidine biosynthesis; L-histidine from 5-phospho-alpha-D-ribose 1-diphosphate: step 7/9. This is Histidinol-phosphate aminotransferase from Leptospira interrogans serogroup Icterohaemorrhagiae serovar Lai (strain 56601).